The sequence spans 563 residues: Secreted lipase ARB07186/07185 (563 aa).

A signal peptide spans 1 to 20 (MAKYDFVMLWILTLTAAIAA). Cys-83 and Cys-101 are disulfide-bonded. Catalysis depends on Ser-215, which acts as the Acyl-ester intermediate. An intrachain disulfide couples Cys-268 to Cys-281.

This sequence belongs to the type-B carboxylesterase/lipase family.

It localises to the secreted. It catalyses the reaction a triacylglycerol + H2O = a diacylglycerol + a fatty acid + H(+). The protein is Secreted lipase ARB07186/07185 of Arthroderma benhamiae (strain ATCC MYA-4681 / CBS 112371) (Trichophyton mentagrophytes).